A 380-amino-acid polypeptide reads, in one-letter code: Probable protein phosphatase 2C 63 (380 aa).

The region spanning 35-338 (DYSIAVVQAN…DDISVIVVYL (304 aa)) is the PPM-type phosphatase domain. The Mn(2+) site is built by D66, G67, D270, and D329.

Belongs to the PP2C family. It depends on Mg(2+) as a cofactor. Requires Mn(2+) as cofactor.

The catalysed reaction is O-phospho-L-seryl-[protein] + H2O = L-seryl-[protein] + phosphate. The enzyme catalyses O-phospho-L-threonyl-[protein] + H2O = L-threonyl-[protein] + phosphate. May dephosphorylate and repress plasma membrane H(+)-ATPases (PM H(+)-ATPases, e.g. AHA1 and AHA2), thus influencing negatively plant growth and fitness. The chain is Probable protein phosphatase 2C 63 from Arabidopsis thaliana (Mouse-ear cress).